Consider the following 798-residue polypeptide: Vacuolar protein sorting-associated protein 53 homolog (798 aa).

It belongs to the VPS53 family. Component of the Golgi-associated retrograde protein (GARP) complex, also called VFT (VPS fifty-three) complex, composed of vps-51, vps-52, vps-53 and vps-54. Within the complex interacts with vps-51, vps-52 and vps-54. Ubiquitously expressed, with particularly strong expression in neuronal cells. Specifically expressed in head and tail neurons and in the pharynx and ventral cord motor neurons.

The protein localises to the golgi apparatus. It is found in the trans-Golgi network membrane. Its subcellular location is the endosome membrane. The protein resides in the perikaryon. It localises to the cytoplasm. The protein localises to the perinuclear region. Functionally, acts as a component of the GARP complex that is involved in retrograde transport from early and late endosomes to the trans-Golgi network (TGN). The GARP complex facilitates tethering as well as SNARE complex assembly at the Golgi. Plays a role in the trafficking of cargo to dense-core vesicles, probably through association with the EARP-interacting protein eipr-1. Important for neuronal function. The chain is Vacuolar protein sorting-associated protein 53 homolog from Caenorhabditis elegans.